Consider the following 620-residue polypeptide: UDP-glucose:protein N-beta-glucosyltransferase (620 aa).

Belongs to the glycosyltransferase 41 family. It depends on Does not require a metal cofactor. as a cofactor.

It is found in the cytoplasm. The catalysed reaction is L-asparaginyl-[protein] + UDP-alpha-D-glucose = N(4)-(beta-D-glucosyl)-L-asparaginyl-[protein] + UDP + H(+). Its pathway is protein modification; protein glycosylation. Inverting glycosyltransferase that catalyzes the transfer of one glucose moiety from UDP-glucose to an asparagine residue in peptides and proteins containing the NX(S/T) motif, resulting in their modification with a beta-linked 1,N-glucose. Likely acts as a key component of a general protein glycosylation system. Also accepts UDP-galactose as a substrate donor, albeit with low efficiency. Cannot use UDP-GlcNAc or UDP-GalNAc as substrate donor. This Actinobacillus pleuropneumoniae serotype 7 (strain AP76) protein is UDP-glucose:protein N-beta-glucosyltransferase.